Here is a 500-residue protein sequence, read N- to C-terminus: Betaine aldehyde dehydrogenase, chloroplastic (500 aa).

Residues 1-7 (MSMPIPS) constitute a chloroplast transit peptide. 238–243 (GSSATG) is an NAD(+) binding site. The active-site Proton acceptor is glutamate 260. Cysteine 294 acts as the Nucleophile in catalysis.

It belongs to the aldehyde dehydrogenase family. Homodimer.

It localises to the plastid. The protein localises to the chloroplast. The enzyme catalyses betaine aldehyde + NAD(+) + H2O = glycine betaine + NADH + 2 H(+). It participates in amine and polyamine biosynthesis; betaine biosynthesis via choline pathway; betaine from betaine aldehyde: step 1/1. This is Betaine aldehyde dehydrogenase, chloroplastic from Beta vulgaris (Sugar beet).